We begin with the raw amino-acid sequence, 529 residues long: Probable serine carboxypeptidase ARB_06414 (529 aa).

An N-terminal signal peptide occupies residues 1–19 (MRGLSYFVLALSAIDAAAA). The segment at 171–191 (PTDDNPSRPVGTGFSQGKPSV) is disordered. The active site involves serine 225. Residues asparagine 284 and asparagine 377 are each glycosylated (N-linked (GlcNAc...) asparagine). Aspartate 434 is a catalytic residue. 2 N-linked (GlcNAc...) asparagine glycosylation sites follow: asparagine 440 and asparagine 448. Histidine 503 is an active-site residue.

It belongs to the peptidase S10 family.

Its subcellular location is the secreted. Removes acidic, neutral and basic amino acids as well as proline from the C-terminal position. The sequence is that of Probable serine carboxypeptidase ARB_06414 from Arthroderma benhamiae (strain ATCC MYA-4681 / CBS 112371) (Trichophyton mentagrophytes).